A 458-amino-acid chain; its full sequence is Mitochondrial distribution and morphology protein 10 (458 aa).

The tract at residues 307-339 is disordered; the sequence is LDQRRTEPLDAPNTNSSVFSKERVQKKQGPKED. Basic and acidic residues predominate over residues 326 to 339; sequence SKERVQKKQGPKED.

The protein belongs to the MDM10 family. As to quaternary structure, component of the ER-mitochondria encounter structure (ERMES) or MDM complex, composed of MMM1, MDM10, MDM12 and MDM34. Associates with the mitochondrial outer membrane sorting assembly machinery SAM(core) complex.

The protein localises to the mitochondrion outer membrane. In terms of biological role, component of the ERMES/MDM complex, which serves as a molecular tether to connect the endoplasmic reticulum and mitochondria. Components of this complex are involved in the control of mitochondrial shape and protein biogenesis and may function in phospholipid exchange. MDM10 is involved in the late assembly steps of the general translocase of the mitochondrial outer membrane (TOM complex). Functions in the TOM40-specific route of the assembly of outer membrane beta-barrel proteins, including the association of TOM40 with the receptor TOM22 and small TOM proteins. Can associate with the SAM(core) complex as well as the MDM12-MMM1 complex, both involved in late steps of the major beta-barrel assembly pathway, that is responsible for biogenesis of all outer membrane beta-barrel proteins. May act as a switch that shuttles between both complexes and channels precursor proteins into the TOM40-specific pathway. Plays a role in mitochondrial morphology and in the inheritance of mitochondria. The polypeptide is Mitochondrial distribution and morphology protein 10 (Lachancea thermotolerans (strain ATCC 56472 / CBS 6340 / NRRL Y-8284) (Yeast)).